Consider the following 231-residue polypeptide: MVVYLVGAGPGDPELITLKAVNVLKKADVVLYDKPANEEILKYAEGAKLIYVGKQAGHHYKSQNEINTLLVEEAKENDLVVRLKGGDPFVFGRGGEEILALVEEGIDFELVPGVTSAIGVPTTIGLPVTHRGVATSFTVVTGHEDPTKCKKQVGWDFKADTIVILMGIGNLAENTAEIMKHKDPETPVCVIENGTMEGQRIITGTLENIAGKDIKPPALVVLEMLSMFLKK.

S-adenosyl-L-homocysteine is bound by residues Pro10, 85–87 (GGD), 115–116 (TS), Met166, and Ala218.

It belongs to the precorrin methyltransferase family. Homodimer.

The enzyme catalyses uroporphyrinogen III + 2 S-adenosyl-L-methionine = precorrin-2 + 2 S-adenosyl-L-homocysteine + H(+). It carries out the reaction uroporphyrinogen III + S-adenosyl-L-methionine = precorrin-1 + S-adenosyl-L-homocysteine + H(+). The catalysed reaction is precorrin-1 + S-adenosyl-L-methionine = precorrin-2 + S-adenosyl-L-homocysteine. It participates in cofactor biosynthesis; adenosylcobalamin biosynthesis; precorrin-2 from uroporphyrinogen III: step 1/1. Does not show substrate inhibition at uroporphyrinogen III concentrations of up to 20 uM, in contrast to SUMT from Sinorhizobium (previously believed to be P.denitrificans). Its function is as follows. Catalyzes the two successive C-2 and C-7 methylation reactions involved in the conversion of uroporphyrinogen III to precorrin-2 via the intermediate formation of precorrin-1. It is a step in the biosynthesis of both cobalamin (vitamin B12) and coenzyme F430. The polypeptide is Uroporphyrinogen-III C-methyltransferase (cobA) (Methanobacterium ivanovii).